A 136-amino-acid polypeptide reads, in one-letter code: Ribonuclease P protein component (136 aa).

Belongs to the RnpA family. In terms of assembly, consists of a catalytic RNA component (M1 or rnpB) and a protein subunit.

The enzyme catalyses Endonucleolytic cleavage of RNA, removing 5'-extranucleotides from tRNA precursor.. Its function is as follows. RNaseP catalyzes the removal of the 5'-leader sequence from pre-tRNA to produce the mature 5'-terminus. It can also cleave other RNA substrates such as 4.5S RNA. The protein component plays an auxiliary but essential role in vivo by binding to the 5'-leader sequence and broadening the substrate specificity of the ribozyme. The sequence is that of Ribonuclease P protein component from Burkholderia mallei (strain NCTC 10247).